The sequence spans 69 residues: Putative membrane protein insertion efficiency factor (69 aa).

This sequence belongs to the UPF0161 family.

The protein localises to the cell inner membrane. In terms of biological role, could be involved in insertion of integral membrane proteins into the membrane. The chain is Putative membrane protein insertion efficiency factor from Dechloromonas aromatica (strain RCB).